The following is a 456-amino-acid chain: Bifunctional protein GlmU (456 aa).

The pyrophosphorylase stretch occupies residues 1–229 (MLNNAMSVVI…LSEVEGVNNR (229 aa)). UDP-N-acetyl-alpha-D-glucosamine is bound by residues 11–14 (LAAG), Lys-25, Gln-76, 81–82 (GT), 103–105 (YGD), Gly-140, Glu-154, Asn-169, and Asn-227. Asp-105 contacts Mg(2+). Asn-227 provides a ligand contact to Mg(2+). The interval 230–250 (LQLSRLERVYQSEQAEKLLLA) is linker. The interval 251 to 456 (GVMLRDPARF…EGWRRPVKKK (206 aa)) is N-acetyltransferase. Arg-333 and Lys-351 together coordinate UDP-N-acetyl-alpha-D-glucosamine. The active-site Proton acceptor is the His-363. Residues Tyr-366 and Asn-377 each contribute to the UDP-N-acetyl-alpha-D-glucosamine site. Residues Ala-380, 386-387 (NY), Ser-405, Ala-423, and Arg-440 contribute to the acetyl-CoA site.

It in the N-terminal section; belongs to the N-acetylglucosamine-1-phosphate uridyltransferase family. In the C-terminal section; belongs to the transferase hexapeptide repeat family. As to quaternary structure, homotrimer. The cofactor is Mg(2+).

The protein resides in the cytoplasm. The catalysed reaction is alpha-D-glucosamine 1-phosphate + acetyl-CoA = N-acetyl-alpha-D-glucosamine 1-phosphate + CoA + H(+). It carries out the reaction N-acetyl-alpha-D-glucosamine 1-phosphate + UTP + H(+) = UDP-N-acetyl-alpha-D-glucosamine + diphosphate. It participates in nucleotide-sugar biosynthesis; UDP-N-acetyl-alpha-D-glucosamine biosynthesis; N-acetyl-alpha-D-glucosamine 1-phosphate from alpha-D-glucosamine 6-phosphate (route II): step 2/2. Its pathway is nucleotide-sugar biosynthesis; UDP-N-acetyl-alpha-D-glucosamine biosynthesis; UDP-N-acetyl-alpha-D-glucosamine from N-acetyl-alpha-D-glucosamine 1-phosphate: step 1/1. The protein operates within bacterial outer membrane biogenesis; LPS lipid A biosynthesis. Functionally, catalyzes the last two sequential reactions in the de novo biosynthetic pathway for UDP-N-acetylglucosamine (UDP-GlcNAc). The C-terminal domain catalyzes the transfer of acetyl group from acetyl coenzyme A to glucosamine-1-phosphate (GlcN-1-P) to produce N-acetylglucosamine-1-phosphate (GlcNAc-1-P), which is converted into UDP-GlcNAc by the transfer of uridine 5-monophosphate (from uridine 5-triphosphate), a reaction catalyzed by the N-terminal domain. The chain is Bifunctional protein GlmU from Shigella sonnei (strain Ss046).